The chain runs to 468 residues: Tumor necrosis factor receptor superfamily member 10A (468 aa).

Positions 1–23 are cleaved as a signal peptide; sequence MAPPPARVHLGAFLAVTPNPGSA. The segment at 17 to 82 is disordered; that stretch reads TPNPGSAASG…APGPRPAREA (66 aa). The span at 20–34 shows a compositional bias: low complexity; sequence PGSAASGTEAAAATP. Residues 24-239 lie on the Extracellular side of the membrane; sequence ASGTEAAAAT…VHKESGNGHN (216 aa). R52 carries the omega-N-methylarginine modification. Residues 63 to 74 show a composition bias toward low complexity; sequence GPSARARAGRAP. TNFR-Cys repeat units follow at residues 107–145, 147–188, and 189–229; these read SAATIKLHDQSIGTQQWEHSPLGELCPPGSHRSEHPGAC, RCTE…NTAC, and QCKP…DIEC. Intrachain disulfides connect C132/C145, C148/C164, C167/C180, C170/C188, C190/C204, C207/C221, and C211/C229. N156 carries N-linked (GlcNAc...) asparagine glycosylation. A helical transmembrane segment spans residues 240–262; that stretch reads IWVILVVTLVVPLLLVAVLIVCC. The Cytoplasmic segment spans residues 263–468; the sequence is CIGSGCGGDP…DGTGSAVSLE (206 aa). One can recognise a Death domain in the interval 365–448; that stretch reads MLFFDKFANI…HAREKIQDLL (84 aa). 3 positions are modified to phosphoserine: S424, S463, and S466.

In terms of assembly, monomer. Homooligomers and heterooligomers with TNFRSF10B. Three TNFRSF10A molecules interact with the TNFSF10 homotrimer. Can interact with TRADD and RIPK1. Interacts with ARAP1. In the absence of stimulation, interacts with BIRC2, DDX3X and GSK3B. The interaction with BIRC2 and DDX3X is further enhanced upon receptor stimulation and accompanied by DDX3X and BIRC2 cleavage. Interacts with ZDHHC3. Interacts with PTPN6; this interaction enables the inhibition of T-cell receptor signaling via LCK. As to quaternary structure, (Microbial infection) Interacts with HCMV protein UL141; this interaction prevents TNFRSF10A cell surface expression. Palmitoylated. Palmitoylation of TNFRSF10A is required for its association with lipid rafts, oligomerization and function in TRAIL-induced cell death. Palmitoylated by ZDHHC3. Widely expressed. High levels are found in spleen, peripheral blood leukocytes, small intestine and thymus, but also in K-562 erythroleukemia cells, MCF-7 breast carcinoma cells and activated T-cells.

It localises to the cell membrane. The protein resides in the membrane raft. Its subcellular location is the cytoplasm. The protein localises to the cytosol. Receptor for the cytotoxic ligand TNFSF10/TRAIL. The adapter molecule FADD recruits caspase-8 to the activated receptor. The resulting death-inducing signaling complex (DISC) performs caspase-8 proteolytic activation which initiates the subsequent cascade of caspases (aspartate-specific cysteine proteases) mediating apoptosis. Promotes the activation of NF-kappa-B. The polypeptide is Tumor necrosis factor receptor superfamily member 10A (TNFRSF10A) (Homo sapiens (Human)).